The sequence spans 1401 residues: Alpha-latrotoxin-Lt1a (1401 aa).

The signal sequence occupies residues 1–20 (MISVGEIMERANHSLVRMRR). A furin-like endopeptidase recognition region region spans residues 17–20 (RMRR). A helix H8 is the probable transmembrane region of the tetrameric pore inserted in the target cell membrane region spans residues 238 to 257 (VLYALLYGTQTYVSVMFFLL). Cys413 and Cys1066 are joined by a disulfide. ANK repeat units follow at residues 458-489 (LYNA…ATFD), 490-521 (HGRT…ELNQ), 525-554 (KGYT…SINS), 559-589 (FLQT…NINE), 593-622 (DGFT…DVNA), 626-656 (TGLT…DINA), 660-690 (NNIT…NANV), 695-723 (GLLS…NVNV), 729-758 (GGIT…NIEQ), 762-791 (EKYT…NFEA), 795-824 (SGAT…NWRD), 828-857 (NGQM…TVVD), 862-891 (NSDT…DINT), 895-924 (KGLA…NVYI), 928-957 (DGMN…KFEW), 971-1003 (EECA…GNFA), 1004-1033 (ICGP…SVDG), 1035-1064 (KTDT…KVNH), 1068-1097 (NGMT…DFRR), 1101-1131 (RGTT…DINI), 1137-1166 (DKDT…DVTI), and 1170-1199 (YDKT…KFRR). The 4C4.1 epitope stretch occupies residues 1026 to 1032 (EEFLSVD). The tract at residues 1196-1199 (KFRR) is furin-like endopeptidase recognition region. Positions 1200-1401 (EYKSSYGERS…SDGILTKKLM (202 aa)) are excised as a propeptide.

The protein belongs to the cationic peptide 01 (latrotoxin) family. 03 (alpha-latrotoxin) subfamily. As to quaternary structure, homotetramer in membranes. Post-translationally, processed by furin-like proteases at both the N- and C-termini. In terms of tissue distribution, expressed in venom gland, cephalothorax, and abdomen tissues from both males and females.

Its subcellular location is the secreted. The protein resides in the target cell membrane. Functionally, presynaptic neurotoxin that causes massive release of neurotransmitters from vertebrate (but not invertebrate) nerve terminals and endocrine cells via a complex mechanism involving activation of receptor(s) and toxin insertion into the plasma membrane with subsequent pore formation. Binds to neurexin-1-alpha (NRXN1) in a calcium dependent manner, adhesion G protein-coupled receptor L1 (ADGRL1, also termed latrophilin-1 and calcium-independent receptor of latrotoxin (CIRL)), and receptor-type tyrosine-protein phosphatase S (PTPRS), also termed PTP sigma. NRXN1 and PTPRS are suggested to provide a platform for binding and subsequent pore formation events. In contrast, binding to ADGRL1 does not involve oligomerization and channel formation, but direct downstream stimulation of the synaptic fusion machinery. The protein is Alpha-latrotoxin-Lt1a of Latrodectus tredecimguttatus (Mediterranean black widow spider).